The following is a 152-amino-acid chain: Deoxyuridine 5'-triphosphate nucleotidohydrolase (152 aa).

Substrate is bound by residues 71–73, N84, 88–90, and K98; these read RSG and LID.

Belongs to the dUTPase family. Requires Mg(2+) as cofactor.

It carries out the reaction dUTP + H2O = dUMP + diphosphate + H(+). It participates in pyrimidine metabolism; dUMP biosynthesis; dUMP from dCTP (dUTP route): step 2/2. Its function is as follows. This enzyme is involved in nucleotide metabolism: it produces dUMP, the immediate precursor of thymidine nucleotides and it decreases the intracellular concentration of dUTP so that uracil cannot be incorporated into DNA. In Legionella pneumophila (strain Paris), this protein is Deoxyuridine 5'-triphosphate nucleotidohydrolase.